The following is a 58-amino-acid chain: Small ribosomal subunit protein bS21 (58 aa).

Residues 32-42 (VRKREHYEKPS) are compositionally biased toward basic and acidic residues. A disordered region spans residues 32-58 (VRKREHYEKPSVKKKKKSEAARKRKFK). The span at 43 to 58 (VKKKKKSEAARKRKFK) shows a compositional bias: basic residues.

Belongs to the bacterial ribosomal protein bS21 family.

The protein is Small ribosomal subunit protein bS21 of Clostridium botulinum (strain Okra / Type B1).